Here is a 150-residue protein sequence, read N- to C-terminus: Small ribosomal subunit protein uS11z (150 aa).

Position 19 is a phosphoserine (S19).

This sequence belongs to the universal ribosomal protein uS11 family. In terms of assembly, interacts with AAK6.

The protein resides in the cytoplasm. The chain is Small ribosomal subunit protein uS11z (RPS14A) from Arabidopsis thaliana (Mouse-ear cress).